The primary structure comprises 65 residues: uncharacterized protein (65 aa).

This is an uncharacterized protein from Treponema pallidum (strain Nichols).